Here is a 155-residue protein sequence, read N- to C-terminus: Nuclear cap-binding protein subunit 2 (155 aa).

MRNA-binding positions include Tyr19, Tyr42, Arg111–Asp115, Arg122–Arg126, and Gln132–Val133. Residues Asn39 to Gly117 form the RRM domain. The tract at residues Arg122–Pro155 is disordered. Residues Val133–Pro143 show a composition bias toward basic and acidic residues.

The protein belongs to the RRM NCBP2 family. As to quaternary structure, component of the nuclear cap-binding complex (CBC), a heterodimer composed of ncbp1/cbp80 and ncbp2/cbp20 that interacts with m7GpppG-capped RNA.

Its subcellular location is the nucleus. It localises to the cytoplasm. In terms of biological role, component of the cap-binding complex (CBC), which binds co-transcriptionally to the 5' cap of pre-mRNAs and is involved in various processes such as pre-mRNA splicing, translation regulation, nonsense-mediated mRNA decay, RNA-mediated gene silencing (RNAi) by microRNAs (miRNAs) and mRNA export. The CBC complex is involved in mRNA export from the nucleus, leading to the recruitment of the mRNA export machinery to the 5' end of mRNA and to mRNA export in a 5' to 3' direction through the nuclear pore. The CBC complex is also involved in mediating U snRNA and intronless mRNAs export from the nucleus. The CBC complex is essential for a pioneer round of mRNA translation, before steady state translation when the CBC complex is replaced by cytoplasmic cap-binding protein eIF4E. The pioneer round of mRNA translation mediated by the CBC complex plays a central role in nonsense-mediated mRNA decay (NMD), NMD only taking place in mRNAs bound to the CBC complex, but not on eIF4E-bound mRNAs. The CBC complex enhances NMD in mRNAs containing at least one exon-junction complex (EJC), promoting the interaction between upf1 and upf2. The CBC complex is also involved in 'failsafe' NMD, which is independent of the EJC complex, while it does not participate in Staufen-mediated mRNA decay (SMD). During cell proliferation, the CBC complex is also involved in microRNAs (miRNAs) biogenesis via its interaction with srrt/ars2, thereby being required for miRNA-mediated RNA interference. The CBC complex also acts as a negative regulator of parn, thereby acting as an inhibitor of mRNA deadenylation. In the CBC complex, ncbp2/cbp20 recognizes and binds capped RNAs (m7GpppG-capped RNA) but requires ncbp1/cbp80 to stabilize the movement of its N-terminal loop and lock the CBC into a high affinity cap-binding state with the cap structure. The conventional cap-binding complex with NCBP2 binds both small nuclear RNA (snRNA) and messenger (mRNA) and is involved in their export from the nucleus. The chain is Nuclear cap-binding protein subunit 2 (ncbp2) from Salmo salar (Atlantic salmon).